Consider the following 180-residue polypeptide: Segregation and condensation protein B (180 aa).

Belongs to the ScpB family. In terms of assembly, homodimer. Homodimerization may be required to stabilize the binding of ScpA to the Smc head domains. Component of a cohesin-like complex composed of ScpA, ScpB and the Smc homodimer, in which ScpA and ScpB bind to the head domain of Smc. The presence of the three proteins is required for the association of the complex with DNA.

Its subcellular location is the cytoplasm. Participates in chromosomal partition during cell division. May act via the formation of a condensin-like complex containing Smc and ScpA that pull DNA away from mid-cell into both cell halves. This chain is Segregation and condensation protein B, found in Staphylococcus epidermidis (strain ATCC 35984 / DSM 28319 / BCRC 17069 / CCUG 31568 / BM 3577 / RP62A).